Here is a 473-residue protein sequence, read N- to C-terminus: Levansucrase (473 aa).

Positions 1-29 (MNIKKFAKQATVLTFTTALLAGGATQAFA) are cleaved as a signal peptide. Residues Trp85, Asp86, and Ser164 each contribute to the sucrose site. Residue Asp86 is the Nucleophile of the active site. Residue Asp241 coordinates Ca(2+). The sucrose site is built by Arg246 and Asp247. Residues Gln272, Leu308, Asn310, and Asp339 each coordinate Ca(2+). Sucrose is bound at residue Glu340. Glu342 serves as the catalytic Proton donor/acceptor. Sucrose is bound at residue Arg360.

This sequence belongs to the glycosyl hydrolase 68 family. In terms of assembly, monomer.

It is found in the secreted. It catalyses the reaction [6)-beta-D-fructofuranosyl-(2-&gt;](n) alpha-D-glucopyranoside + sucrose = [6)-beta-D-fructofuranosyl-(2-&gt;](n+1) alpha-D-glucopyranoside + D-glucose. With respect to regulation, ca(2+) may play an important structural role and promote stability of levansucrase. The enzyme concentration is a factor defining the molecular weight (MW) levan distribution. A bimodal distribution is reported at the usual enzyme concentrations. At low concentrations, the enzyme synthesizes high MW levan, and at high concentrations, it synthesizes low MW levan. Its function is as follows. Catalyzes the synthesis of levan, a fructose polymer, by transferring the fructosyl moiety from sucrose to a growing acceptor molecule. Also displays sucrose hydrolase activity. At low sucrose concentrations, functions as an hydrolase with water as acceptor, whereas at higher substrate concentrations it adds fructosyl units to a growing levan chain. This Bacillus subtilis (strain 168) protein is Levansucrase.